A 135-amino-acid chain; its full sequence is MFNRESYLLRKYRLIVFFLSGYEYFLGFLMISSLVPIIALTASKLLRPKTRGPERRTTYESGVEPIGGAWIQFNIRYYMFALVFVIFDVETVFLYPWAVAFHQLGLLAFIEALIFIAILVVALVYAWRKGALEWS.

3 consecutive transmembrane segments (helical) span residues 15-35 (IVFF…SSLV), 79-99 (MFAL…PWAV), and 104-124 (LGLL…VALV).

It belongs to the complex I subunit 3 family. As to quaternary structure, NDH-1 can be composed of about 15 different subunits; different subcomplexes with different compositions have been identified which probably have different functions.

It is found in the cellular thylakoid membrane. It carries out the reaction a plastoquinone + NADH + (n+1) H(+)(in) = a plastoquinol + NAD(+) + n H(+)(out). The enzyme catalyses a plastoquinone + NADPH + (n+1) H(+)(in) = a plastoquinol + NADP(+) + n H(+)(out). NDH-1 shuttles electrons from an unknown electron donor, via FMN and iron-sulfur (Fe-S) centers, to quinones in the respiratory and/or the photosynthetic chain. The immediate electron acceptor for the enzyme in this species is believed to be plastoquinone. Couples the redox reaction to proton translocation, and thus conserves the redox energy in a proton gradient. Cyanobacterial NDH-1 also plays a role in inorganic carbon-concentration. This is NAD(P)H-quinone oxidoreductase subunit 3 from Trichodesmium erythraeum (strain IMS101).